A 288-amino-acid chain; its full sequence is ATP synthase gamma chain (288 aa).

This sequence belongs to the ATPase gamma chain family. In terms of assembly, F-type ATPases have 2 components, CF(1) - the catalytic core - and CF(0) - the membrane proton channel. CF(1) has five subunits: alpha(3), beta(3), gamma(1), delta(1), epsilon(1). CF(0) has three main subunits: a, b and c.

It localises to the cell inner membrane. Its function is as follows. Produces ATP from ADP in the presence of a proton gradient across the membrane. The gamma chain is believed to be important in regulating ATPase activity and the flow of protons through the CF(0) complex. This Paracidovorax citrulli (strain AAC00-1) (Acidovorax citrulli) protein is ATP synthase gamma chain.